Reading from the N-terminus, the 123-residue chain is uncharacterized protein (123 aa).

The helical transmembrane segment at 5–25 (GTLVILFAIILILCIMLLFYY) threads the bilayer.

It belongs to the asfivirus CP123L family.

The protein localises to the host membrane. The protein resides in the virion. This is an uncharacterized protein from Ornithodoros (relapsing fever ticks).